Consider the following 367-residue polypeptide: Probable thylakoidal processing peptidase 2, chloroplastic (367 aa).

The N-terminal 68 residues, 1-68 (MAIRVTFTYS…NTWGPSSGPR (68 aa)), are a transit peptide targeting the chloroplast. A disordered region spans residues 53-72 (DKSPGSNTWGPSSGPRARPA). The span at 62 to 72 (GPSSGPRARPA) shows a compositional bias: low complexity. Residues 185-205 (EDAKAAFTAVTVSLLFRSALA) traverse the membrane as a helical segment. Residues 206-367 (EPKSIPSTSM…VSQKRAVDVS (162 aa)) are Lumenal, thylakoid-facing. The active site involves serine 214.

It belongs to the peptidase S26 family.

It is found in the plastid. Its subcellular location is the chloroplast thylakoid membrane. The enzyme catalyses Cleavage of hydrophobic, N-terminal signal or leader sequences from secreted and periplasmic proteins.. Its function is as follows. Cleaves the thylakoid-transfer domain from a chloroplast protein. This Arabidopsis thaliana (Mouse-ear cress) protein is Probable thylakoidal processing peptidase 2, chloroplastic (TPP2).